Consider the following 312-residue polypeptide: Retinol dehydrogenase 8 (312 aa).

9 to 18 (LISGCSSGIG) is a binding site for NADP(+). Helical transmembrane passes span 87 to 107 (VLVN…SLAA), 138 to 158 (IVVV…VYAA), and 170 to 190 (LAVQ…GPVV). Ser-143 is a substrate binding site. Catalysis depends on Tyr-156, which acts as the Proton acceptor.

The protein belongs to the short-chain dehydrogenases/reductases (SDR) family. In terms of tissue distribution, detected in photoreceptor outer segments in the retina (at protein level).

Its subcellular location is the membrane. It catalyses the reaction all-trans-retinol + NADP(+) = all-trans-retinal + NADPH + H(+). Functionally, retinol dehydrogenase with a clear preference for NADP. Converts all-trans-retinal to all-trans-retinol. May play a role in the regeneration of visual pigment at high light intensity. The protein is Retinol dehydrogenase 8 (RDH8) of Bos taurus (Bovine).